The chain runs to 302 residues: Sulfate adenylyltransferase subunit 2 (302 aa).

This sequence belongs to the PAPS reductase family. CysD subfamily. Heterodimer composed of CysD, the smaller subunit, and CysN.

The catalysed reaction is sulfate + ATP + H(+) = adenosine 5'-phosphosulfate + diphosphate. Its pathway is sulfur metabolism; hydrogen sulfide biosynthesis; sulfite from sulfate: step 1/3. Its function is as follows. With CysN forms the ATP sulfurylase (ATPS) that catalyzes the adenylation of sulfate producing adenosine 5'-phosphosulfate (APS) and diphosphate, the first enzymatic step in sulfur assimilation pathway. APS synthesis involves the formation of a high-energy phosphoric-sulfuric acid anhydride bond driven by GTP hydrolysis by CysN coupled to ATP hydrolysis by CysD. The polypeptide is Sulfate adenylyltransferase subunit 2 (Escherichia coli O157:H7 (strain EC4115 / EHEC)).